A 161-amino-acid polypeptide reads, in one-letter code: Urocortin-3 (161 aa).

The signal sequence occupies residues 1–21 (MLMPVHFLLLLLLLLGGPRTG). A propeptide spanning residues 22-118 (LPHKFYKAKP…QDTAKSPHRT (97 aa)) is cleaved from the precursor. The segment at 64–118 (SRDASSGEEEEGKEKKTFPISGARGGARGTRYRYVSQAQPRGKPRQDTAKSPHRT) is disordered. Isoleucine amide is present on Ile157.

It belongs to the sauvagine/corticotropin-releasing factor/urotensin I family. As to quaternary structure, binds with high affinity to CRF receptors 2-alpha and 2-beta.

The protein resides in the secreted. Suppresses food intake, delays gastric emptying and decreases heat-induced edema. Might represent an endogenous ligand for maintaining homeostasis after stress. The protein is Urocortin-3 (UCN3) of Homo sapiens (Human).